Here is a 418-residue protein sequence, read N- to C-terminus: Tyrosine--tRNA ligase (418 aa).

Position 38 (Tyr-38) interacts with L-tyrosine. The short motif at 43 to 52 is the 'HIGH' region element; it reads CTARSLHIGS. Positions 175 and 179 each coordinate L-tyrosine. The 'KMSKS' region motif lies at 235-239; that stretch reads KMGKT. Lys-238 is a binding site for ATP. One can recognise an S4 RNA-binding domain in the interval 348–413; it reads LSVVKLLQVS…CGKKRHLKVV (66 aa).

The protein belongs to the class-I aminoacyl-tRNA synthetase family. TyrS type 1 subfamily. As to quaternary structure, homodimer.

The protein localises to the cytoplasm. It catalyses the reaction tRNA(Tyr) + L-tyrosine + ATP = L-tyrosyl-tRNA(Tyr) + AMP + diphosphate + H(+). In terms of biological role, catalyzes the attachment of tyrosine to tRNA(Tyr) in a two-step reaction: tyrosine is first activated by ATP to form Tyr-AMP and then transferred to the acceptor end of tRNA(Tyr). The sequence is that of Tyrosine--tRNA ligase from Ehrlichia ruminantium (strain Gardel).